The following is a 237-amino-acid chain: Uridylate kinase (237 aa).

Residue lysine 12–glycine 15 coordinates ATP. Glycine 54 lines the UMP pocket. ATP-binding residues include glycine 55 and arginine 59. UMP-binding positions include aspartate 72 and threonine 133 to threonine 140. ATP-binding residues include tyrosine 166 and aspartate 169.

The protein belongs to the UMP kinase family. Homohexamer.

Its subcellular location is the cytoplasm. The enzyme catalyses UMP + ATP = UDP + ADP. It participates in pyrimidine metabolism; CTP biosynthesis via de novo pathway; UDP from UMP (UMPK route): step 1/1. Inhibited by UTP. Its function is as follows. Catalyzes the reversible phosphorylation of UMP to UDP. This is Uridylate kinase from Caldanaerobacter subterraneus subsp. tengcongensis (strain DSM 15242 / JCM 11007 / NBRC 100824 / MB4) (Thermoanaerobacter tengcongensis).